Reading from the N-terminus, the 229-residue chain is Aminopyrimidine aminohydrolase (229 aa).

Position 44 (Asp-44) interacts with substrate. Residue Cys-137 is the Nucleophile of the active site. Substrate contacts are provided by Tyr-141 and Tyr-167. Glu-208 serves as the catalytic Proton donor.

Belongs to the TenA family. In terms of assembly, homotetramer.

It catalyses the reaction 4-amino-5-aminomethyl-2-methylpyrimidine + H2O = 4-amino-5-hydroxymethyl-2-methylpyrimidine + NH4(+). The catalysed reaction is thiamine + H2O = 5-(2-hydroxyethyl)-4-methylthiazole + 4-amino-5-hydroxymethyl-2-methylpyrimidine + H(+). Its pathway is cofactor biosynthesis; thiamine diphosphate biosynthesis. Its function is as follows. Catalyzes an amino-pyrimidine hydrolysis reaction at the C5' of the pyrimidine moiety of thiamine compounds, a reaction that is part of a thiamine salvage pathway. Thus, catalyzes the conversion of 4-amino-5-aminomethyl-2-methylpyrimidine to 4-amino-5-hydroxymethyl-2-methylpyrimidine (HMP). Is also able to catalyze the hydrolytic cleavage of thiamine; however, this thiaminase activity may not be physiologically relevant. Therefore, is probably involved in the regeneration of the thiamine pyrimidine from thiamine degraded products present in the environment, rather than in thiamine degradation. The chain is Aminopyrimidine aminohydrolase from Staphylococcus aureus (strain MRSA252).